The primary structure comprises 456 residues: Antigen Lp49 (456 aa).

Residues 1–34 (MNSNPKKKFLKLIKIKSDIILLIPIFLFLVCCKS) form the signal peptide. Cys-346 and Cys-347 form a disulfide bridge.

The protein resides in the cell outer membrane. In terms of biological role, may be involved in virulence. Binds human plasminogen (PLG) and stimulates its proteolytic cleavage to enzymatically active plasmin in the presence of an urokinase-type PLG activator in vitro. Activated plasmin has proteolytic activity which may help the bacteria to spread throughout the host by degrading extracellular matrix components, facilitating tissue penetration and invasion. The protein is Antigen Lp49 of Leptospira interrogans serogroup Icterohaemorrhagiae serovar copenhageni (strain Fiocruz L1-130).